The following is a 268-amino-acid chain: Indole-3-glycerol phosphate synthase (268 aa).

The protein belongs to the TrpC family.

It carries out the reaction 1-(2-carboxyphenylamino)-1-deoxy-D-ribulose 5-phosphate + H(+) = (1S,2R)-1-C-(indol-3-yl)glycerol 3-phosphate + CO2 + H2O. Its pathway is amino-acid biosynthesis; L-tryptophan biosynthesis; L-tryptophan from chorismate: step 4/5. In Lachnospira eligens (strain ATCC 27750 / DSM 3376 / VPI C15-48 / C15-B4) (Eubacterium eligens), this protein is Indole-3-glycerol phosphate synthase.